The sequence spans 491 residues: GTPase Der (491 aa).

EngA-type G domains follow at residues 54–217 (PVLA…PEYS) and 229–402 (RRIA…ESWD). Residues 60–67 (GRPNVGKS), 107–111 (DTGGW), 169–172 (NKVD), 235–242 (GRPNVGKS), 282–286 (DTAGI), and 347–350 (NKWD) each bind GTP. One can recognise a KH-like domain in the interval 403–485 (RRIPTGRLNA…PIEVNMRVRE (83 aa)).

It belongs to the TRAFAC class TrmE-Era-EngA-EngB-Septin-like GTPase superfamily. EngA (Der) GTPase family. As to quaternary structure, associates with the 50S ribosomal subunit.

Its function is as follows. GTPase that plays an essential role in the late steps of ribosome biogenesis. This Paenarthrobacter aurescens (strain TC1) protein is GTPase Der.